The chain runs to 625 residues: 1-deoxy-D-xylulose-5-phosphate synthase 1 (625 aa).

Residues His74 and 115–117 (GHT) contribute to the thiamine diphosphate site. Asp146 contributes to the Mg(2+) binding site. Residues 147 to 148 (GS), Asn175, Tyr286, and Glu368 each bind thiamine diphosphate. Asn175 contacts Mg(2+).

Belongs to the transketolase family. DXPS subfamily. In terms of assembly, homodimer. The cofactor is Mg(2+). It depends on thiamine diphosphate as a cofactor.

The enzyme catalyses D-glyceraldehyde 3-phosphate + pyruvate + H(+) = 1-deoxy-D-xylulose 5-phosphate + CO2. It participates in metabolic intermediate biosynthesis; 1-deoxy-D-xylulose 5-phosphate biosynthesis; 1-deoxy-D-xylulose 5-phosphate from D-glyceraldehyde 3-phosphate and pyruvate: step 1/1. Its function is as follows. Catalyzes the acyloin condensation reaction between C atoms 2 and 3 of pyruvate and glyceraldehyde 3-phosphate to yield 1-deoxy-D-xylulose-5-phosphate (DXP). This Geobacter metallireducens (strain ATCC 53774 / DSM 7210 / GS-15) protein is 1-deoxy-D-xylulose-5-phosphate synthase 1.